The chain runs to 350 residues: 3-isopropylmalate dehydrogenase (350 aa).

76–87 (GPKWDNAPKRPE) lines the NAD(+) pocket. Substrate contacts are provided by R94, R104, R132, and D217. 3 residues coordinate Mg(2+): D217, D241, and D245. 275–287 (GSAPDIANQNIAN) lines the NAD(+) pocket.

The protein belongs to the isocitrate and isopropylmalate dehydrogenases family. LeuB type 1 subfamily. In terms of assembly, homodimer. Mg(2+) serves as cofactor. Mn(2+) is required as a cofactor.

It localises to the cytoplasm. It carries out the reaction (2R,3S)-3-isopropylmalate + NAD(+) = 4-methyl-2-oxopentanoate + CO2 + NADH. Its pathway is amino-acid biosynthesis; L-leucine biosynthesis; L-leucine from 3-methyl-2-oxobutanoate: step 3/4. Functionally, catalyzes the oxidation of 3-carboxy-2-hydroxy-4-methylpentanoate (3-isopropylmalate) to 3-carboxy-4-methyl-2-oxopentanoate. The product decarboxylates to 4-methyl-2 oxopentanoate. The chain is 3-isopropylmalate dehydrogenase from Listeria monocytogenes serotype 4b (strain F2365).